A 558-amino-acid chain; its full sequence is Formate--tetrahydrofolate ligase (558 aa).

66–73 (TPAGEGKT) contacts ATP.

This sequence belongs to the formate--tetrahydrofolate ligase family.

It catalyses the reaction (6S)-5,6,7,8-tetrahydrofolate + formate + ATP = (6R)-10-formyltetrahydrofolate + ADP + phosphate. It functions in the pathway one-carbon metabolism; tetrahydrofolate interconversion. The polypeptide is Formate--tetrahydrofolate ligase (Neisseria meningitidis serogroup C (strain 053442)).